Reading from the N-terminus, the 261-residue chain is Short chain dehydrogenase/reductase astE (261 aa).

4 residues coordinate NADP(+): Ile24, Asp70, Asn97, and Lys131. Catalysis depends on proton donor residues Ser150 and Tyr164. Positions 164, 168, 197, and 199 each coordinate NADP(+). Lys168 (lowers pKa of active site Tyr) is an active-site residue.

The protein belongs to the short-chain dehydrogenases/reductases (SDR) family.

Its pathway is secondary metabolite biosynthesis; terpenoid biosynthesis. Its function is as follows. Short chain dehydrogenase/reductase; part of the gene cluster that mediates the biosynthesis of astellolides, drimane-type sesquiterpene esters that show antimicrobial, anti-inflammatory, and anti-tumor activities. The first step in astellolide biosynthesis is performed by the sesquiterpene cyclase astC that catalyzes the formation of drimanyl pyrophosphate from farnesyl pyrophosphate. Drimanyl pyrophosphate is then dephosphorylated by the sesquiterpene phosphatase astI to produce drimanyl monophosphate which is further dephosphorylated to drim-8-ene-11-ol by atsK. Drim-8-ene-11-ol is converted to confertifolin, probably by the cytochrome P450 monooxygenase astD and/or the dehydrogenase astE. The cytochrome P450 monooxygenases astB, astF and astJ then hydroxylate confertifolin at C6, C14, or C15 to form trihydroxy confertifolin. The nonribosomal peptide synthetase astA catalyzes ester bond formation between trihydroxy contifolin and benzoic acid (BA) or 4-hydroxy benzoic acid (4HBA), leading to the formation of dideacetyl astellolides A and B, respectively. Finally, the O-acetyltransferase astG converts dideacetyl astellolides A and B into deacetyl astellolides A and B. This chain is Short chain dehydrogenase/reductase astE, found in Aspergillus oryzae (strain ATCC 42149 / RIB 40) (Yellow koji mold).